The following is a 61-amino-acid chain: Small ribosomal subunit protein uS14 (61 aa).

Residues Cys24, Cys27, Cys40, and Cys43 each contribute to the Zn(2+) site.

The protein belongs to the universal ribosomal protein uS14 family. Zinc-binding uS14 subfamily. In terms of assembly, part of the 30S ribosomal subunit. Contacts proteins S3 and S10. Requires Zn(2+) as cofactor.

Binds 16S rRNA, required for the assembly of 30S particles and may also be responsible for determining the conformation of the 16S rRNA at the A site. The protein is Small ribosomal subunit protein uS14 of Ruminiclostridium cellulolyticum (strain ATCC 35319 / DSM 5812 / JCM 6584 / H10) (Clostridium cellulolyticum).